The chain runs to 236 residues: Phosphoribosylaminoimidazole-succinocarboxamide synthase (236 aa).

It belongs to the SAICAR synthetase family.

The enzyme catalyses 5-amino-1-(5-phospho-D-ribosyl)imidazole-4-carboxylate + L-aspartate + ATP = (2S)-2-[5-amino-1-(5-phospho-beta-D-ribosyl)imidazole-4-carboxamido]succinate + ADP + phosphate + 2 H(+). It participates in purine metabolism; IMP biosynthesis via de novo pathway; 5-amino-1-(5-phospho-D-ribosyl)imidazole-4-carboxamide from 5-amino-1-(5-phospho-D-ribosyl)imidazole-4-carboxylate: step 1/2. The polypeptide is Phosphoribosylaminoimidazole-succinocarboxamide synthase (Pelodictyon phaeoclathratiforme (strain DSM 5477 / BU-1)).